A 570-amino-acid chain; its full sequence is Sulfite reductase [NADPH] hemoprotein beta-component (570 aa).

Residues Cys434, Cys440, Cys479, and Cys483 each coordinate [4Fe-4S] cluster. A siroheme-binding site is contributed by Cys483.

Belongs to the nitrite and sulfite reductase 4Fe-4S domain family. In terms of assembly, alpha(8)-beta(8). The alpha component is a flavoprotein, the beta component is a hemoprotein. Siroheme serves as cofactor. Requires [4Fe-4S] cluster as cofactor.

It catalyses the reaction hydrogen sulfide + 3 NADP(+) + 3 H2O = sulfite + 3 NADPH + 4 H(+). It functions in the pathway sulfur metabolism; hydrogen sulfide biosynthesis; hydrogen sulfide from sulfite (NADPH route): step 1/1. Its function is as follows. Component of the sulfite reductase complex that catalyzes the 6-electron reduction of sulfite to sulfide. This is one of several activities required for the biosynthesis of L-cysteine from sulfate. The polypeptide is Sulfite reductase [NADPH] hemoprotein beta-component (Escherichia coli (strain B / BL21-DE3)).